A 226-amino-acid chain; its full sequence is Large ribosomal subunit protein uL3 (226 aa).

Residues 135 to 150 (MSSQRASHGNSRSHNV) are compositionally biased toward polar residues. Positions 135 to 158 (MSSQRASHGNSRSHNVPGSIGMAQ) are disordered. N5-methylglutamine is present on Gln-158.

It belongs to the universal ribosomal protein uL3 family. In terms of assembly, part of the 50S ribosomal subunit. Forms a cluster with proteins L14 and L19. Post-translationally, methylated by PrmB.

Functionally, one of the primary rRNA binding proteins, it binds directly near the 3'-end of the 23S rRNA, where it nucleates assembly of the 50S subunit. This is Large ribosomal subunit protein uL3 from Variovorax paradoxus (strain S110).